The sequence spans 492 residues: Sestrin-1 (492 aa).

The tract at residues 71–252 is N-terminal domain; may mediate the alkylhydroperoxide reductase activity; sequence FADSFAALGR…ICDITNGNHS (182 aa). Catalysis depends on Cys-130, which acts as the Cysteine sulfenic acid (-SOH) intermediate. A phosphoserine mark is found at Ser-293 and Ser-314. A C-terminal domain; mediates TORC1 regulation region spans residues 321 to 492; that stretch reads PARDVSRHFE…ALRAITRYMT (172 aa). Residues 386-389, Thr-398, and Glu-463 each bind L-leucine; that span reads TYNT.

The protein belongs to the sestrin family. In terms of assembly, interacts with the GATOR2 complex which is composed of MIOS, SEC13, SEH1L, WDR24 and WDR59; the interaction is negatively regulated by leucine. Interacts with RRAGA, RRAGB, RRAGC and RRAGD; may function as a guanine nucleotide dissociation inhibitor for RRAGs and regulate them. Interacts with KEAP1, RBX1 and SQSTM1; in the SQSTM1-dependent autophagic degradation of KEAP1. May interact with PRDX1.

It is found in the nucleus. Its subcellular location is the cytoplasm. It catalyses the reaction a hydroperoxide + L-cysteinyl-[protein] = S-hydroxy-L-cysteinyl-[protein] + an alcohol. Functionally, functions as an intracellular leucine sensor that negatively regulates the TORC1 signaling pathway through the GATOR complex. In absence of leucine, binds the GATOR subcomplex GATOR2 and prevents TORC1 signaling. Binding of leucine to SESN2 disrupts its interaction with GATOR2 thereby activating the TORC1 signaling pathway. This stress-inducible metabolic regulator may also play a role in protection against oxidative and genotoxic stresses. May positively regulate the transcription by NFE2L2 of genes involved in the response to oxidative stress by facilitating the SQSTM1-mediated autophagic degradation of KEAP1. Moreover, may prevent the accumulation of reactive oxygen species (ROS) through the alkylhydroperoxide reductase activity born by the N-terminal domain of the protein. Was originally reported to contribute to oxidative stress resistance by reducing PRDX1. However, this could not be confirmed. The chain is Sestrin-1 from Macaca fascicularis (Crab-eating macaque).